Reading from the N-terminus, the 548-residue chain is Probable malate:quinone oxidoreductase (548 aa).

Belongs to the MQO family. The cofactor is FAD.

It catalyses the reaction (S)-malate + a quinone = a quinol + oxaloacetate. The protein operates within carbohydrate metabolism; tricarboxylic acid cycle; oxaloacetate from (S)-malate (quinone route): step 1/1. This is Probable malate:quinone oxidoreductase from Escherichia coli O6:K15:H31 (strain 536 / UPEC).